Reading from the N-terminus, the 92-residue chain is CRISPR-associated endoribonuclease Cas2 3 (92 aa).

Aspartate 9 contacts Mg(2+).

The protein belongs to the CRISPR-associated endoribonuclease Cas2 protein family. Homodimer, forms a heterotetramer with a Cas1 homodimer. Mg(2+) serves as cofactor.

Its function is as follows. CRISPR (clustered regularly interspaced short palindromic repeat), is an adaptive immune system that provides protection against mobile genetic elements (viruses, transposable elements and conjugative plasmids). CRISPR clusters contain sequences complementary to antecedent mobile elements and target invading nucleic acids. CRISPR clusters are transcribed and processed into CRISPR RNA (crRNA). Functions as a ssRNA-specific endoribonuclease. Involved in the integration of spacer DNA into the CRISPR cassette. This Synechocystis sp. (strain ATCC 27184 / PCC 6803 / Kazusa) protein is CRISPR-associated endoribonuclease Cas2 3.